A 317-amino-acid chain; its full sequence is Mitochondrial thiamine pyrophosphate carrier 1 (317 aa).

6 helical membrane passes run 15–37 (TVSW…MATA), 80–100 (IPAT…YSWF), 118–138 (LTVG…LDLL), 168–190 (GFFT…MFLT), 205–227 (FWSR…TMVF), and 281–300 (GLTM…LFVY). 3 Solcar repeats span residues 16-103 (VSWY…FNNV), 112-197 (SQQG…VNIV), and 206-306 (WSRP…TMDL).

It belongs to the mitochondrial carrier (TC 2.A.29) family.

The protein resides in the mitochondrion inner membrane. Its function is as follows. Mitochondrial transporter that mediates uptake of thiamine pyrophosphate (ThPP) into mitochondria. This Kluyveromyces lactis (strain ATCC 8585 / CBS 2359 / DSM 70799 / NBRC 1267 / NRRL Y-1140 / WM37) (Yeast) protein is Mitochondrial thiamine pyrophosphate carrier 1 (TPC1).